The chain runs to 364 residues: MCNVSQDSCNIDSRLDSLFPPTLYIFVMVIGFPTNCLSLWAAFVQVRQKNELGVYLLNLSISDLLYIATLPPWVNYFLHQDNWIHGPESCKLFGFILYTNIYISIGFLSCISVDRYLAVAHPLKFAKVRRVKTAAVVSAVVWAIEIGANSAPLFHNELFEDRFNHTFCFEKYPMEDWVAQMNLYRVFVGFLFPWVLMLFCYQGILRAVKTNVSTEREEKAKIKRLALSLIAILLFCFAPYHLILLSRSVVYLGQPCDCTFEENIFTAYHVSLALTSLNCVADPILYCLANEGARSEVTRGLAPLMKFFSASRPNMDSFARSVTLDTPWSSRRAAAPSPRSWSLCGQTGGRGRRSRVRRRRDCKC.

The Extracellular portion of the chain corresponds to 1–8 (MCNVSQDS). The N-linked (GlcNAc...) asparagine glycan is linked to Asn3. The helical transmembrane segment at 9–45 (CNIDSRLDSLFPPTLYIFVMVIGFPTNCLSLWAAFVQ) threads the bilayer. Cystine bridges form between Cys9–Cys258 and Cys90–Cys168. Residues 46-49 (VRQK) are Cytoplasmic-facing. The helical transmembrane segment at 50–80 (NELGVYLLNLSISDLLYIATLPPWVNYFLHQ) threads the bilayer. The Extracellular portion of the chain corresponds to 81-85 (DNWIH). A helical membrane pass occupies residues 86–121 (GPESCKLFGFILYTNIYISIGFLSCISVDRYLAVAH). Over 122 to 129 (PLKFAKVR) the chain is Cytoplasmic. The chain crosses the membrane as a helical span at residues 130–156 (RVKTAAVVSAVVWAIEIGANSAPLFHN). At 157 to 172 (ELFEDRFNHTFCFEKY) the chain is on the extracellular side. An extracellular loop 2 (ECL2) region spans residues 157–172 (ELFEDRFNHTFCFEKY). N-linked (GlcNAc...) asparagine glycosylation occurs at Asn164. The chain crosses the membrane as a helical span at residues 173-210 (PMEDWVAQMNLYRVFVGFLFPWVLMLFCYQGILRAVKT). Residues 211–214 (NVST) are Cytoplasmic-facing. A helical transmembrane segment spans residues 215-250 (EREEKAKIKRLALSLIAILLFCFAPYHLILLSRSVV). Residues 251-260 (YLGQPCDCTF) are Extracellular-facing. Residues 261–289 (EENIFTAYHVSLALTSLNCVADPILYCLA) traverse the membrane as a helical segment. Topologically, residues 290–364 (NEGARSEVTR…RVRRRRDCKC (75 aa)) are cytoplasmic.

The protein belongs to the G-protein coupled receptor 1 family.

It is found in the cell membrane. Activated by a network of residues that connects an extracellular-facing cavity to Glu-145, a conserved charged residue buried in the transmembrane core of the receptor. Protonation likely drives conformational changes in extracellular loop 2 (ECL2), which stabilizes movement of transmembrane 3 (TM3) and a series of rearrangements that connect the extracellular-facing cavity to Glu-145, a residue only conserved in proton-sensing G-protein coupled receptors. Its function is as follows. Proton-sensing G-protein coupled receptor activated by extracellular pH, which is required to monitor pH changes and generate adaptive reactions. Ligand binding causes a conformation change that triggers signaling via guanine nucleotide-binding proteins (G proteins) and modulates the activity of downstream effectors, such as adenylate cyclase. This Callorhinchus milii (Ghost shark) protein is G-protein coupled receptor 4.